The chain runs to 651 residues: Probable potassium transport system protein Kup (651 aa).

The next 12 helical transmembrane spans lie at 41–61 (LVLGALGVVYGDIGTSPIYAF), 82–102 (VVSLIFWALTLVVTIKYVLFV), 130–150 (LILGVGICGAALFFGDAVITP), 163–183 (IVAPDLTPFVVPITVVILVTL), 194–214 (VAIVFGPIMALWFLALGASGL), 235–255 (FLMISPGIAFITVGAVFLAMT), 276–296 (WLWIVFPCLLLNYFGQAAFIL), 309–329 (MMPSFALLPMVLLATAATVIA), 366–386 (IYIPRVNLLLGLAVVILVLGF), 395–415 (AYGIAVTGNMLVTTVLLYIVM), 426–446 (ALPIIVGFLIIDIMFFGANII), and 450–470 (EGGWASIGIAAILVLIMWTWV).

This sequence belongs to the HAK/KUP transporter (TC 2.A.72) family.

The protein resides in the cell inner membrane. It carries out the reaction K(+)(in) + H(+)(in) = K(+)(out) + H(+)(out). Transport of potassium into the cell. Likely operates as a K(+):H(+) symporter. This is Probable potassium transport system protein Kup from Brucella anthropi (strain ATCC 49188 / DSM 6882 / CCUG 24695 / JCM 21032 / LMG 3331 / NBRC 15819 / NCTC 12168 / Alc 37) (Ochrobactrum anthropi).